A 359-amino-acid polypeptide reads, in one-letter code: Cytohesin-interacting protein (359 aa).

One can recognise a PDZ domain in the interval 77 to 166; it reads LVTVEKQDNE…LLTIETLNGT (90 aa). The interaction with CYTH1 stretch occupies residues 166–188; sequence TMILKRTELEAKLQVLKQTLKQK. Positions 166–188 form a coiled coil; the sequence is TMILKRTELEAKLQVLKQTLKQK.

As to quaternary structure, interacts with CYTH1 and SNX27. Expressed in lymph nodes, thymus, spleen, lung, peripheral blood leukocytes and bone marrow.

The protein resides in the cytoplasm. Its subcellular location is the early endosome. Functionally, by its binding to cytohesin-1 (CYTH1), it modifies activation of ARFs by CYTH1 and its precise function may be to sequester CYTH1 in the cytoplasm. The protein is Cytohesin-interacting protein (CYTIP) of Homo sapiens (Human).